Consider the following 160-residue polypeptide: Cathelin-related peptide SC5 (160 aa).

The first 29 residues, 1–29 (METQRASLSLGRRSLWLLLLGLVLASASA), serve as a signal peptide directing secretion. The propeptide occupies 30–131 (QALSYREAVL…DITCAEPQSV (102 aa)). Intrachain disulfides connect Cys86-Cys97 and Cys108-Cys125.

This sequence belongs to the cathelicidin family.

Its subcellular location is the secreted. In terms of biological role, broad spectrum bactericidal agent. The polypeptide is Cathelin-related peptide SC5 (Ovis aries (Sheep)).